Consider the following 397-residue polypeptide: GDP-mannose transporter 1 (397 aa).

The disordered stretch occupies residues 1–57 (MSKPFVPTPNISRPATPSSLDYGKDEASSTLLRDMGERGDRERKDREERDKKEAMPS). Residues 1–61 (MSKPFVPTPN…KEAMPSGQDQ (61 aa)) are Cytoplasmic-facing. The segment covering 9-19 (PNISRPATPSS) has biased composition (polar residues). The segment covering 34 to 54 (DMGERGDRERKDREERDKKEA) has biased composition (basic and acidic residues). Residues 62 to 82 (VLPILSYCAASIMMTVVNKYV) form a helical membrane-spanning segment. The Lumenal portion of the chain corresponds to 83 to 87 (VSGAN). N-linked (GlcNAc...) asparagine glycosylation is present at Asn87. A helical membrane pass occupies residues 88–108 (FTMTFLLLAIQSSVCVLAVTT). At 109-124 (VKKLGFISFRDFDKND) the chain is on the cytoplasmic side. A helical transmembrane segment spans residues 125–142 (AKAWWPISTLLVAVIYTG). At 143–145 (SKA) the chain is on the lumenal side. A helical transmembrane segment spans residues 146–168 (LQFLSIPVYTIFKNLTIILIAYG). Residues 169 to 174 (EVFMFN) are Cytoplasmic-facing. The chain crosses the membrane as a helical span at residues 175-197 (GAVSGLTLCSFALMVGSSIIAAW). The Lumenal segment spans residues 198 to 228 (SDITSVWNKEPELDPITGLEITVGPVSTIGG). The chain crosses the membrane as a helical span at residues 229–249 (LNAGYIWMALNCFVSAAYVLF). Over 250–272 (MRKRIKVTGFKDWDSMYYNNLLS) the chain is Cytoplasmic. A helical transmembrane segment spans residues 273 to 293 (IPILVVFSLVIEDWGSESLAL). Topologically, residues 294 to 300 (NFPASNR) are lumenal. The helical transmembrane segment at 301 to 321 (VLLLSAMAFSGAAAVFISYST) threads the bilayer. At 322-332 (AWCVRITGSTT) the chain is on the cytoplasmic side. The helical transmembrane segment at 333–353 (YSMVGALNKLPVAASGILFFG) threads the bilayer. Topologically, residues 354–355 (DP) are lumenal. A helical transmembrane segment spans residues 356 to 376 (ANFGNISAIAVGGVAGVVYAV). Topologically, residues 377–397 (AKTNQAKVEKARQARAAGGRP) are cytoplasmic.

The protein belongs to the TPT transporter family. SLC35D subfamily. As to quaternary structure, homooligomer.

Its subcellular location is the golgi apparatus membrane. The protein resides in the cytoplasmic vesicle membrane. It localises to the endoplasmic reticulum membrane. Involved in the import of GDP-mannose from the cytoplasm into the Golgi lumen. Involved in capsule synthesis. The protein is GDP-mannose transporter 1 (GMT1) of Cryptococcus neoformans var. neoformans serotype D (strain B-3501A) (Filobasidiella neoformans).